The sequence spans 314 residues: DNA topoisomerase I (314 aa).

The 238-residue stretch at 77-314 folds into the Topo IB-type catalytic domain; sequence IQNRNAKRDR…VDHVKSSTDG (238 aa). Tyrosine 274 (O-(3'-phospho-DNA)-tyrosine intermediate) is an active-site residue.

The protein belongs to the type IB topoisomerase family.

The protein resides in the virion. It catalyses the reaction ATP-independent breakage of single-stranded DNA, followed by passage and rejoining.. In terms of biological role, releases the supercoiling and torsional tension of DNA introduced during the DNA replication and transcription by transiently cleaving and rejoining one strand of the DNA duplex. Introduces a single-strand break via transesterification at the specific target site 5'-[CT]CCTTp site in duplex DNA. The scissile phosphodiester is attacked by the catalytic tyrosine of the enzyme, resulting in the formation of a DNA-(3'-phosphotyrosyl)-enzyme intermediate and the expulsion of a 5'-OH DNA strand. The free DNA strand then undergoes passage around the unbroken strand thus removing DNA supercoils. Finally, in the religation step, the DNA 5'-OH attacks the covalent intermediate to expel the active-site tyrosine and restore the DNA phosphodiester backbone. This Cynomys gunnisoni (Gunnison's prairie dog) protein is DNA topoisomerase I (OPG111).